The following is a 236-amino-acid chain: Virion protein US10 homolog (236 aa).

The disordered stretch occupies residues 1–32 (MDGAYGHVHNGSPMAVDGEESGAGTGTGAGAD). The segment covering 21 to 31 (SGAGTGTGAGA) has biased composition (gly residues). A zinc finger lies at 138 to 150 (CAYWCCLGHAFAC).

Belongs to the herpesviridae US10 family. Phosphorylated.

Its subcellular location is the virion tegument. The protein resides in the host nucleus matrix. The chain is Virion protein US10 homolog (IR5) from Equine herpesvirus 1 (strain Kentucky A) (EHV-1).